The following is a 400-amino-acid chain: Plasminogen activator inhibitor 1 (400 aa).

The N-terminal stretch at Met-1–Ala-21 is a signal peptide. Asn-230, Asn-286, and Asn-350 each carry an N-linked (GlcNAc...) asparagine glycan.

The protein belongs to the serpin family. As to quaternary structure, forms a heterodimer with TMPRSS7. Interacts with VTN. Binds LRP1B; binding is followed by internalization and degradation. Interacts with PPP1CB. In complex with PLAU/uPA, interacts with PLAUR/uPAR. Interacts with SORL1 and LRP1, either alone or in complex with PLAU; these interactions are abolished in the presence of LRPAP1/RAP. The ternary complex composed of PLAUR-PLAU-PAI1 also interacts with SORL1. Interacts with PLAT/tPA. Also interacts with SORL1, when complexed to PLAT/tPA.

It localises to the secreted. Serine protease inhibitor. Inhibits TMPRSS7. Is a primary inhibitor of tissue-type plasminogen activator (PLAT) and urokinase-type plasminogen activator (PLAU). As PLAT inhibitor, it is required for fibrinolysis down-regulation and is responsible for the controlled degradation of blood clots. As PLAU inhibitor, it is involved in the regulation of cell adhesion and spreading. Acts as a regulator of cell migration, independently of its role as protease inhibitor. It is required for stimulation of keratinocyte migration during cutaneous injury repair. It is involved in cellular and replicative senescence. Plays a role in alveolar type 2 cells senescence in the lung. Is involved in the regulation of cementogenic differentiation of periodontal ligament stem cells, and regulates odontoblast differentiation and dentin formation during odontogenesis. This is Plasminogen activator inhibitor 1 (SERPINE1) from Neovison vison (American mink).